Consider the following 269-residue polypeptide: MRVAIYHSSDEHSIQVGKDLAKILSQNEIVIDNEKPTVVITIGGDGTLLSAVQKYLNLLEEVRFVGVHTGHLGFYTDWREYELETLVKALKSDGGAEVSYPLLNIDVTHTDGSHISYKAVNESTLRKLSGTMVADVLIGDNLFERFRGDGLCISTPTGSTAYNRSVGGAIVHPRLEVLQMAEIASINNRVFRTVGASLIMAPNETITIRPVPSFHRTYNFTADRIDLLDKHVKEVHYSIDEQKVKFLKYRHTGFWNRVRNSFIGSIDEV.

Aspartate 45 acts as the Proton acceptor in catalysis. NAD(+) is bound by residues 45-46, 121-122, arginine 147, aspartate 149, 160-165, and alanine 184; these read DG, NE, and TAYNRS.

This sequence belongs to the NAD kinase family. It depends on a divalent metal cation as a cofactor.

The protein resides in the cytoplasm. The enzyme catalyses NAD(+) + ATP = ADP + NADP(+) + H(+). Its function is as follows. Involved in the regulation of the intracellular balance of NAD and NADP, and is a key enzyme in the biosynthesis of NADP. Catalyzes specifically the phosphorylation on 2'-hydroxyl of the adenosine moiety of NAD to yield NADP. This Pediococcus pentosaceus (strain ATCC 25745 / CCUG 21536 / LMG 10740 / 183-1w) protein is NAD kinase.